Reading from the N-terminus, the 1276-residue chain is Probable outer membrane protein pmp6 (1276 aa).

The signal sequence occupies residues 1–23; that stretch reads MKYSLPWLLTSSALVFSLHPLMA. Residues 981 to 1276 enclose the Autotransporter domain; that stretch reads DAPSHPGIWI…NANCGTRYSF (296 aa).

Belongs to the PMP outer membrane protein family.

Its subcellular location is the secreted. It localises to the cell wall. It is found in the cell outer membrane. This is Probable outer membrane protein pmp6 (pmp6) from Chlamydia pneumoniae (Chlamydophila pneumoniae).